We begin with the raw amino-acid sequence, 217 residues long: E3 ubiquitin-protein ligase znrf2 (217 aa).

Disordered stretches follow at residues 1–27 and 63–111; these read MGAKQSSPAANGRTRAYSGSDLPSATA and QFIS…ERST. Glycine 2 carries the N-myristoyl glycine lipid modification. Polar residues predominate over residues 68–100; it reads RTRSVGPSARPQSGINIPNSGAYSSADSGNSTP. An RING-type; atypical zinc finger spans residues 174-215; it reads CAICLEELLQGDTIARLPCLCIYHKGCIDEWFEVNRSCPEHP.

The protein resides in the endosome membrane. The protein localises to the lysosome membrane. Its subcellular location is the presynaptic cell membrane. It catalyses the reaction S-ubiquitinyl-[E2 ubiquitin-conjugating enzyme]-L-cysteine + [acceptor protein]-L-lysine = [E2 ubiquitin-conjugating enzyme]-L-cysteine + N(6)-ubiquitinyl-[acceptor protein]-L-lysine.. Its pathway is protein modification; protein ubiquitination. May play a role in the establishment and maintenance of neuronal transmission and plasticity via its ubiquitin ligase activity. E3 ubiquitin ligases accept ubiquitin from an E2 ubiquitin-conjugating enzyme in the form of a thioester and then directly transfer the ubiquitin to targeted substrates. The polypeptide is E3 ubiquitin-protein ligase znrf2 (znrf2) (Danio rerio (Zebrafish)).